The chain runs to 235 residues: Pyridoxine/pyridoxamine 5'-phosphate oxidase (235 aa).

Residues arginine 30 to tyrosine 33 and lysine 88 each bind substrate. Residues arginine 83 to lysine 88, tyrosine 98 to threonine 99, arginine 104, lysine 105, and glutamine 127 contribute to the FMN site. Substrate-binding residues include tyrosine 145, arginine 149, and serine 153. FMN is bound by residues glutamine 162 to serine 163 and tryptophan 207. A substrate-binding site is contributed by arginine 213–histidine 215. Arginine 217 is a binding site for FMN.

The protein belongs to the pyridoxamine 5'-phosphate oxidase family. Homodimer. FMN is required as a cofactor.

The enzyme catalyses pyridoxamine 5'-phosphate + O2 + H2O = pyridoxal 5'-phosphate + H2O2 + NH4(+). It catalyses the reaction pyridoxine 5'-phosphate + O2 = pyridoxal 5'-phosphate + H2O2. Its pathway is cofactor metabolism; pyridoxal 5'-phosphate salvage; pyridoxal 5'-phosphate from pyridoxamine 5'-phosphate: step 1/1. The protein operates within cofactor metabolism; pyridoxal 5'-phosphate salvage; pyridoxal 5'-phosphate from pyridoxine 5'-phosphate: step 1/1. In terms of biological role, catalyzes the oxidation of either pyridoxine 5'-phosphate (PNP) or pyridoxamine 5'-phosphate (PMP) into pyridoxal 5'-phosphate (PLP). The polypeptide is Pyridoxine/pyridoxamine 5'-phosphate oxidase (Bacteroides fragilis (strain YCH46)).